The primary structure comprises 506 residues: Glutamate--tRNA ligase (506 aa).

The 'HIGH' region motif lies at 12 to 22; it reads PSPTGDPHVGT. The 'KMSKS' region signature appears at 253–257; sequence KLSKR. Residue lysine 256 participates in ATP binding.

The protein belongs to the class-I aminoacyl-tRNA synthetase family. Glutamate--tRNA ligase type 1 subfamily. As to quaternary structure, monomer.

It localises to the cytoplasm. The catalysed reaction is tRNA(Glu) + L-glutamate + ATP = L-glutamyl-tRNA(Glu) + AMP + diphosphate. Functionally, catalyzes the attachment of glutamate to tRNA(Glu) in a two-step reaction: glutamate is first activated by ATP to form Glu-AMP and then transferred to the acceptor end of tRNA(Glu). The sequence is that of Glutamate--tRNA ligase from Chlamydia muridarum (strain MoPn / Nigg).